We begin with the raw amino-acid sequence, 714 residues long: Kinesin-like protein KIN-13 (714 aa).

Positions Met1–Arg63 constitute an SAM domain. Positions Gln69–Gln81 are enriched in polar residues. Disordered stretches follow at residues Gln69–Gln109 and Gly122–Gly161. Over residues Ser82 to Val92 the composition is skewed to low complexity. Over residues Pro151–Arg160 the composition is skewed to pro residues. A Kinesin motor domain is found at Arg183–Leu515. Gly273 to Ser280 provides a ligand contact to ATP.

This sequence belongs to the TRAFAC class myosin-kinesin ATPase superfamily. Kinesin family. KIN-13 subfamily. As to quaternary structure, interacts with PLK. Post-translationally, phosphorylated by PLK.

The protein localises to the cytoplasm. It localises to the cytoskeleton. It is found in the cell projection. The protein resides in the cilium. Its subcellular location is the flagellum. The protein localises to the flagellum basal body. It localises to the flagellum axoneme. It is found in the spindle. The protein resides in the chromosome. Its subcellular location is the centromere. The protein localises to the kinetochore. In terms of biological role, involved in cell cycle. Involved in formation of flagella, regulation of flagellar length, and formation of median bodies during interphase. Regulates flagellar length in all eight distal flagellar tips by promoting disassembly of the microtubules. Disassembles microtubules at the distal flagellar tips in a length-dependent manner in order to maintain different equilibrium lengths of the four flagellar pairs. Regulates interphase and mitotic microtubule dynamics. Regulates microtubule disassembly dynamics of the dual mitotic spindles and the median body. The polypeptide is Kinesin-like protein KIN-13 (Giardia intestinalis (strain ATCC 50803 / WB clone C6) (Giardia lamblia)).